Here is a 93-residue protein sequence, read N- to C-terminus: Small ribosomal subunit protein uS19 (93 aa).

This sequence belongs to the universal ribosomal protein uS19 family.

Protein S19 forms a complex with S13 that binds strongly to the 16S ribosomal RNA. In Synechococcus sp. (strain JA-3-3Ab) (Cyanobacteria bacterium Yellowstone A-Prime), this protein is Small ribosomal subunit protein uS19.